Consider the following 166-residue polypeptide: Large ribosomal subunit protein uL10 (166 aa).

This sequence belongs to the universal ribosomal protein uL10 family. As to quaternary structure, part of the ribosomal stalk of the 50S ribosomal subunit. The N-terminus interacts with L11 and the large rRNA to form the base of the stalk. The C-terminus forms an elongated spine to which L12 dimers bind in a sequential fashion forming a multimeric L10(L12)X complex.

Forms part of the ribosomal stalk, playing a central role in the interaction of the ribosome with GTP-bound translation factors. The chain is Large ribosomal subunit protein uL10 from Streptococcus pyogenes serotype M28 (strain MGAS6180).